Consider the following 503-residue polypeptide: Putative cytochrome P450 71A28 (503 aa).

A helical transmembrane segment spans residues 1–21 (MILISLCFTTFLAFLFLNPLL). Residue Cys443 participates in heme binding.

This sequence belongs to the cytochrome P450 family. It depends on heme as a cofactor.

It localises to the membrane. The protein is Putative cytochrome P450 71A28 (CYP71A28) of Arabidopsis thaliana (Mouse-ear cress).